A 178-amino-acid polypeptide reads, in one-letter code: Oligoribonuclease (178 aa).

Residues leucine 7–leucine 168 enclose the Exonuclease domain. Tyrosine 128 is an active-site residue.

The protein belongs to the oligoribonuclease family.

The protein resides in the cytoplasm. In terms of biological role, 3'-to-5' exoribonuclease specific for small oligoribonucleotides. The polypeptide is Oligoribonuclease (Pseudomonas syringae pv. syringae (strain B728a)).